The following is a 419-amino-acid chain: MLSASTMKEVVYWSPKKVADWLLENAMPEYCEPLGHFTGQDLINLTQEDFTKPPLCRVSSDNGQRLLDMIETLKMEHHIEAHKNGHANGHLSIGVDIPNPDGSFSIKIKPNGMPNGFRKEMIKIPMPEPERSQYPMEWGKTLLAFLYALSCFVLTTVMISVVHERVPPKEVQPPLPDTFFDHFNRVQWAFSICEINGMILVGLWLFQWLLLKYKSIISRRFFCIVGTLYLYRCITMYVTTLPVPGMHFNCSPKLFGDWEAQVRRIMKLIAGGGLSITGSHNMCGDYLYSGHTVMLTLTYLFIKEYSPRRLWWYHWICWLLSVVGIFCILLAHDHYTVDVVVAYYITTRLFWWYHTMANQQVLKEASQMNLLARVWWYRPFQYFEKNVQGIVPRSYHWPLPWPVVHLSRQVKYSRLVNDT.

The 64-residue stretch at 13–76 (WSPKKVADWL…LDMIETLKME (64 aa)) folds into the SAM domain. Residue Ser14 is modified to Phosphoserine. 5 consecutive transmembrane segments (helical) span residues 142-162 (LLAFLYALSCFVLTTVMISVV), 190-210 (FSICEINGMILVGLWLFQWLL), 221-241 (FFCIVGTLYLYRCITMYVTTL), 282-302 (MCGDYLYSGHTVMLTLTYLFI), and 310-330 (LWWYHWICWLLSVVGIFCILL). Residue His291 is part of the active site. Residues 331 to 419 (AHDHYTVDVV…VKYSRLVNDT (89 aa)) lie on the Cytoplasmic side of the membrane. Active-site residues include His334 and Asp338.

The protein belongs to the sphingomyelin synthase family.

The protein localises to the golgi apparatus membrane. It catalyses the reaction an N-acylsphing-4-enine + a 1,2-diacyl-sn-glycero-3-phosphocholine = a sphingomyelin + a 1,2-diacyl-sn-glycerol. The enzyme catalyses 1-(9Z-octadecenoyl)-2-acyl-sn-3-glycerol + a sphingomyelin = a 1-(9Z-octadecenoyl)-2-acyl-sn-glycero-3-phosphocholine + an N-acylsphing-4-enine. It carries out the reaction N-hexadecanoylsphinganine + a 1,2-diacyl-sn-glycero-3-phosphocholine = N-hexadecanoyl-sphinganine-1-phosphocholine + a 1,2-diacyl-sn-glycerol. The catalysed reaction is N-hexadecanoyl-(4R)-hydroxysphinganine + a 1,2-diacyl-sn-glycero-3-phosphocholine = N-hexadecanoyl-(4R)-hydroxysphinganine-phosphocholine + a 1,2-diacyl-sn-glycerol. It catalyses the reaction an N-acylsphing-4-enine + a 1,2-diacyl-sn-glycero-3-phosphoethanolamine = an N-acylsphing-4-enine 1-phosphoethanolamine + a 1,2-diacyl-sn-glycerol. It functions in the pathway sphingolipid metabolism. Functionally, major sphingomyelin synthase at the Golgi apparatus. Catalyzes the reversible transfer of phosphocholine moiety in sphingomyelin biosynthesis: in the forward reaction transfers phosphocholine head group of phosphatidylcholine (PC) on to ceramide (CER) to form ceramide phosphocholine (sphingomyelin, SM) and diacylglycerol (DAG) as by-product, and in the reverse reaction transfers phosphocholine from SM to DAG to form PC and CER. The direction of the reaction depends on the levels of CER and DAG in Golgi membranes. Converts the newly synthesized CER, that is transported from the endoplasmic reticulum to the trans-Golgi by the Cer transport protein (CERT), to SM. Can form a heteromeric complex with glucosylceramide synthase (GCS) increasing SMS activity and reducing glucosylceramide synthesis, a critical mechanism that controls the metabolic fate of CER in the Golgi. Does not use free phosphorylcholine or CDP-choline as donor. Can also transfer phosphoethanolamine head group of phosphatidylethanolamine (PE) on to CER to form ceramide phosphoethanolamine (CPE). Regulates receptor-mediated signal transduction via mitogenic DAG and proapoptotic CER, as well as via SM, a structural component of membrane rafts that serve as platforms for signal transduction and protein sorting. Plays a role in secretory transport via regulation of DAG pool at the Golgi apparatus and its downstream effects on PRKD1. The sequence is that of Phosphatidylcholine:ceramide cholinephosphotransferase 1 (Sgms1) from Rattus norvegicus (Rat).